We begin with the raw amino-acid sequence, 504 residues long: MEEFQGYLELDIFRQHDFLYPLIFREYSXXXAHGHGLNRYMLLENIGYDNKSSLLIVKRLITTMYQQNYLIISANDSKQNPFFGYNKNLHSKILSEGFAIIVEIPFYLRLISSLEGAEIVRFYNLRSIHSIFPFLEEKFPHLNYSADILIPYPAHLEILVQTLRYRVKDASYLHLLRFFLHEYSNCNSLIITNKSISIFSKSNPRFFLFLYNSYICEYESIFLFLRNQSSHLRLTSSGVLFERLCLYRKIEHFAEVFANDFPVIPCFLKDPFMHYVRYQGKSILASKDTPLLMNKWKSYLVNLWQCHFDVWSHAASIRINQLSKHSLDFLSYFSSVRRNPAVVRNQMLENSFLLNNAPNKLDTIVPIIPLIGSLAKAKFCNAVGHPISKLTRADLSDFEIINRFLHICRNLSHYYSGSSKKKNMYRIKYILRLSCVKTLARKHKSTARAFLKRVDSEFFQEFFTEEGGFISLIFPRASFALRRLYSGRVWYLDIIFINGLSNHE.

This sequence belongs to the intron maturase 2 family. MatK subfamily.

The protein resides in the plastid. Its subcellular location is the chloroplast. In terms of biological role, usually encoded in the trnK tRNA gene intron. Probably assists in splicing its own and other chloroplast group II introns. The chain is Maturase K from Quercus robur (English oak).